The following is a 145-amino-acid chain: Transcription antitermination protein NusB (145 aa).

This sequence belongs to the NusB family.

Involved in transcription antitermination. Required for transcription of ribosomal RNA (rRNA) genes. Binds specifically to the boxA antiterminator sequence of the ribosomal RNA (rrn) operons. In Citrifermentans bemidjiense (strain ATCC BAA-1014 / DSM 16622 / JCM 12645 / Bem) (Geobacter bemidjiensis), this protein is Transcription antitermination protein NusB.